A 452-amino-acid polypeptide reads, in one-letter code: Phosphoglucosamine mutase (452 aa).

The Phosphoserine intermediate role is filled by Ser101. The Mg(2+) site is built by Ser101, Asp241, Asp243, and Asp245. A Phosphoserine modification is found at Ser101.

The protein belongs to the phosphohexose mutase family. Mg(2+) is required as a cofactor. Activated by phosphorylation.

It carries out the reaction alpha-D-glucosamine 1-phosphate = D-glucosamine 6-phosphate. Catalyzes the conversion of glucosamine-6-phosphate to glucosamine-1-phosphate. In Lactococcus lactis subsp. lactis (strain IL1403) (Streptococcus lactis), this protein is Phosphoglucosamine mutase.